Here is a 340-residue protein sequence, read N- to C-terminus: Phosphoribosylformylglycinamidine cyclo-ligase (340 aa).

The protein belongs to the AIR synthase family.

The protein resides in the cytoplasm. It catalyses the reaction 2-formamido-N(1)-(5-O-phospho-beta-D-ribosyl)acetamidine + ATP = 5-amino-1-(5-phospho-beta-D-ribosyl)imidazole + ADP + phosphate + H(+). Its pathway is purine metabolism; IMP biosynthesis via de novo pathway; 5-amino-1-(5-phospho-D-ribosyl)imidazole from N(2)-formyl-N(1)-(5-phospho-D-ribosyl)glycinamide: step 2/2. The protein is Phosphoribosylformylglycinamidine cyclo-ligase of Streptococcus pyogenes serotype M3 (strain ATCC BAA-595 / MGAS315).